The chain runs to 912 residues: DNA (cytosine-5)-methyltransferase 3A (912 aa).

Disordered stretches follow at residues 1–178 and 221–286; these read MPAM…GWES and IAGM…EYED. Residues 17–40 are compositionally biased toward basic and acidic residues; it reads AEREEDRKDGEEQEEPRGKEERQE. Basic residues predominate over residues 47–57; that stretch reads KVGRPGRKRKH. Residues 74–83 are compositionally biased toward polar residues; that stretch reads KSPSMAQDSG. Ser-105 is modified (phosphoserine). Residues 113 to 128 show a composition bias toward low complexity; the sequence is GAPAEGEGAAETLPEA. At Thr-124 the chain carries Phosphothreonine. A compositionally biased stretch (basic and acidic residues) spans 149-167; it reads AGKEQKETNIESMKMEGSR. Lys-162 is covalently cross-linked (Glycyl lysine isopeptide (Lys-Gly) (interchain with G-Cter in SUMO2)). Position 171 is an omega-N-methylarginine (Arg-171). Positions 199 to 403 are interaction with DNMT1 and DNMT3B; sequence SKRKRDEWLA…DTAKAVEVQN (205 aa). Phosphoserine is present on residues Ser-243 and Ser-255. Polar residues predominate over residues 246-260; the sequence is AVQQPTDPASPTVAT. Thr-261 bears the Phosphothreonine mark. Ser-267 bears the Phosphoserine mark. A compositionally biased stretch (basic and acidic residues) spans 269–279; it reads AGDKNATKAGD. Residues 292–350 enclose the PWWP domain; sequence IGELVWGKLRGFSWWPGRIVSWWMTGRSRAAEGTRWVMWFGDGKFSVVCVEKLMPLSSF. Residues Ser-390 and Ser-393 each carry the phosphoserine modification. The disordered stretch occupies residues 447–466; the sequence is AYAPPPPAKKPRKSTAEKPK. An ADD domain is found at 482–614; sequence EVRQKCRNIE…LQMFFANNHD (133 aa). A GATA-type; atypical zinc finger spans residues 493 to 523; it reads ICISCGSLNVTLEHPLFVGGMCQNCKNCFLE. Residues 494–586 are interaction with the PRC2/EED-EZH2 complex; the sequence is CISCGSLNVT…KEDPWNCYMC (93 aa). A PHD-type; atypical zinc finger spans residues 534–590; it reads QSYCTICCGGREVLMCGNNNCCRCFCVECVDLLVGPGAAQAAIKEDPWNCYMCGHKG. The 279-residue stretch at 634 to 912 folds into the SAM-dependent MTase C5-type domain; that stretch reads IRVLSLFDGI…APLKEYFACV (279 aa). S-adenosyl-L-methionine contacts are provided by residues 641–645, Glu-664, and 686–688; these read DGIAT and DVR. Cys-710 is an active-site residue. The residue at position 710 (Cys-710) is an S-methylcysteine; by autocatalysis. 891–893 contributes to the S-adenosyl-L-methionine binding site; sequence RSW.

It belongs to the class I-like SAM-binding methyltransferase superfamily. C5-methyltransferase family. Heterotetramer composed of 1 DNMT3A homodimer and 2 DNMT3L subunits (DNMT3L-DNMT3A-DNMT3A-DNMT3L). Interacts with UBC9, PIAS1 and PIAS2. Binds the ZBTB18 transcriptional repressor. Interacts with SETDB1. Associates with HDAC1 through its ADD domain. Interacts with UHRF1. Interacts with DNMT1 and DNMT3B. Interacts with the PRC2/EED-EZH2 complex. Interacts with MPHOSPH8. Interacts with histone H3 that is not methylated at 'Lys-4' (H3K4). Interacts with SPOCD1. Interacts with ZNF263; recruited to the SIX3 promoter along with other proteins involved in chromatin modification and transcriptional corepression where it contributes to transcriptional repression. Post-translationally, sumoylated; sumoylation disrupts the ability to interact with histone deacetylases (HDAC1 and HDAC2) and repress transcription. Auto-methylated at Cys-710: auto-methylation takes place in absence of DNA substrate and inactivates the DNA methyltransferase activity. Inactivation by auto-methylation may be used to inactivate unused DNA methyltransferases in the cell. In terms of tissue distribution, highly expressed in fetal tissues, skeletal muscle, heart, peripheral blood mononuclear cells, kidney, and at lower levels in placenta, brain, liver, colon, spleen, small intestine and lung.

The protein resides in the nucleus. The protein localises to the chromosome. It is found in the cytoplasm. It catalyses the reaction a 2'-deoxycytidine in DNA + S-adenosyl-L-methionine = a 5-methyl-2'-deoxycytidine in DNA + S-adenosyl-L-homocysteine + H(+). The catalysed reaction is L-cysteinyl-[protein] + S-adenosyl-L-methionine = S-methyl-L-cysteinyl-[protein] + S-adenosyl-L-homocysteine + H(+). Activated by binding to the regulatory factor DNMT3L. Auto-methylation at Cys-710 in absence of DNA inactivates the DNA methyltransferase activity. Required for genome-wide de novo methylation and is essential for the establishment of DNA methylation patterns during development. DNA methylation is coordinated with methylation of histones. It modifies DNA in a non-processive manner and also methylates non-CpG sites. May preferentially methylate DNA linker between 2 nucleosomal cores and is inhibited by histone H1. Plays a role in paternal and maternal imprinting. Required for methylation of most imprinted loci in germ cells. Acts as a transcriptional corepressor for ZBTB18. Recruited to trimethylated 'Lys-36' of histone H3 (H3K36me3) sites. Can actively repress transcription through the recruitment of HDAC activity. Also has weak auto-methylation activity on Cys-710 in absence of DNA. The chain is DNA (cytosine-5)-methyltransferase 3A (DNMT3A) from Homo sapiens (Human).